The primary structure comprises 575 residues: Proline--tRNA ligase 1 (575 aa).

This sequence belongs to the class-II aminoacyl-tRNA synthetase family. ProS type 1 subfamily. As to quaternary structure, homodimer.

The protein resides in the cytoplasm. It catalyses the reaction tRNA(Pro) + L-proline + ATP = L-prolyl-tRNA(Pro) + AMP + diphosphate. Its function is as follows. Catalyzes the attachment of proline to tRNA(Pro) in a two-step reaction: proline is first activated by ATP to form Pro-AMP and then transferred to the acceptor end of tRNA(Pro). As ProRS can inadvertently accommodate and process non-cognate amino acids such as alanine and cysteine, to avoid such errors it has two additional distinct editing activities against alanine. One activity is designated as 'pretransfer' editing and involves the tRNA(Pro)-independent hydrolysis of activated Ala-AMP. The other activity is designated 'posttransfer' editing and involves deacylation of mischarged Ala-tRNA(Pro). The misacylated Cys-tRNA(Pro) is not edited by ProRS. The chain is Proline--tRNA ligase 1 from Anaeromyxobacter dehalogenans (strain 2CP-C).